We begin with the raw amino-acid sequence, 612 residues long: Chaperone protein DnaK (612 aa).

At T174 the chain carries Phosphothreonine; by autocatalysis. Residues 578 to 612 (GAQAGAQGQGAAGGQKQDGNVYDADYKVVDDDKKE) form a disordered region. A compositionally biased stretch (basic and acidic residues) spans 601–612 (ADYKVVDDDKKE).

It belongs to the heat shock protein 70 family.

Functionally, acts as a chaperone. The polypeptide is Chaperone protein DnaK (Moorella thermoacetica (strain ATCC 39073 / JCM 9320)).